Reading from the N-terminus, the 94-residue chain is Large ribosomal subunit protein bL27 (94 aa).

Residues 1-25 (MAHKKGTGSTRNGRDSQSKRLGVKR) are disordered.

This sequence belongs to the bacterial ribosomal protein bL27 family.

The sequence is that of Large ribosomal subunit protein bL27 from Gloeothece citriformis (strain PCC 7424) (Cyanothece sp. (strain PCC 7424)).